The sequence spans 419 residues: 3-isopropylmalate dehydratase large subunit (419 aa).

[4Fe-4S] cluster contacts are provided by cysteine 300, cysteine 360, and cysteine 363.

This sequence belongs to the aconitase/IPM isomerase family. LeuC type 2 subfamily. In terms of assembly, heterodimer of LeuC and LeuD. Requires [4Fe-4S] cluster as cofactor.

It carries out the reaction (2R,3S)-3-isopropylmalate = (2S)-2-isopropylmalate. The protein operates within amino-acid biosynthesis; L-leucine biosynthesis; L-leucine from 3-methyl-2-oxobutanoate: step 2/4. Functionally, catalyzes the isomerization between 2-isopropylmalate and 3-isopropylmalate, via the formation of 2-isopropylmaleate. This Clostridium botulinum (strain Eklund 17B / Type B) protein is 3-isopropylmalate dehydratase large subunit.